The primary structure comprises 373 residues: tRNA-specific 2-thiouridylase MnmA (373 aa).

ATP contacts are provided by residues 12–19 (GMSGGVDS) and Met38. Residues 98-100 (NPD) are interaction with target base in tRNA. The Nucleophile role is filled by Cys103. Residues Cys103 and Cys200 are joined by a disulfide bond. Residue Gly127 participates in ATP binding. The interval 150–152 (KDQ) is interaction with tRNA. Cys200 acts as the Cysteine persulfide intermediate in catalysis. The interaction with tRNA stretch occupies residues 312–313 (RY).

This sequence belongs to the MnmA/TRMU family.

The protein resides in the cytoplasm. It carries out the reaction S-sulfanyl-L-cysteinyl-[protein] + uridine(34) in tRNA + AH2 + ATP = 2-thiouridine(34) in tRNA + L-cysteinyl-[protein] + A + AMP + diphosphate + H(+). Catalyzes the 2-thiolation of uridine at the wobble position (U34) of tRNA, leading to the formation of s(2)U34. This chain is tRNA-specific 2-thiouridylase MnmA, found in Streptococcus pneumoniae (strain Hungary19A-6).